A 496-amino-acid chain; its full sequence is Cytochrome P450 4ae1 (496 aa).

Cys-443 is a binding site for heme.

The protein belongs to the cytochrome P450 family. Heme serves as cofactor.

It is found in the endoplasmic reticulum membrane. It localises to the microsome membrane. Functionally, may be involved in the metabolism of insect hormones and in the breakdown of synthetic insecticides. In Drosophila melanogaster (Fruit fly), this protein is Cytochrome P450 4ae1 (Cyp4ae1).